We begin with the raw amino-acid sequence, 364 residues long: MLTFPLINDTSRKIIHIDMDAFFASVEVRDNPSLKGKPVVIARNPLQTGGRGVVSTCSYEARAFGIHSAMSAKEAYDLCPQAIFISGNYEKYTKVSKQVREIFKRYTDNIEAASIDEAYLDVTENKIGAQSAIKIAKLIQHDIFVELGLTCSAGVSYNKFLAKIASDYEKPHGLTLIMPDEALEFLAKLPVEKFHGVGKATVPKLHALGFFTGGDLQKADPVDLAERFGIYGWELFQKANGIHNSKVKNHRERKSVGKERTYGKLLYLPDDIKAELIKISKQVSESLKRHQLKGNIIILKLRYSDFTTLTKRKSMVENLDSPEDIAEAARQIFEEIDYDESLGVRLLGVTVSGFGVQKATLDMQ.

A UmuC domain is found at 14-198; it reads IIHIDMDAFF…LPVEKFHGVG (185 aa). Residues Asp18 and Asp116 each contribute to the Mg(2+) site. Residue Glu117 is part of the active site.

This sequence belongs to the DNA polymerase type-Y family. Monomer. The cofactor is Mg(2+).

It localises to the cytoplasm. The enzyme catalyses DNA(n) + a 2'-deoxyribonucleoside 5'-triphosphate = DNA(n+1) + diphosphate. Poorly processive, error-prone DNA polymerase involved in untargeted mutagenesis. Copies undamaged DNA at stalled replication forks, which arise in vivo from mismatched or misaligned primer ends. These misaligned primers can be extended by PolIV. Exhibits no 3'-5' exonuclease (proofreading) activity. May be involved in translesional synthesis, in conjunction with the beta clamp from PolIII. The protein is DNA polymerase IV of Lactococcus lactis subsp. cremoris (strain MG1363).